The chain runs to 160 residues: SsrA-binding protein (160 aa).

It belongs to the SmpB family.

Its subcellular location is the cytoplasm. Required for rescue of stalled ribosomes mediated by trans-translation. Binds to transfer-messenger RNA (tmRNA), required for stable association of tmRNA with ribosomes. tmRNA and SmpB together mimic tRNA shape, replacing the anticodon stem-loop with SmpB. tmRNA is encoded by the ssrA gene; the 2 termini fold to resemble tRNA(Ala) and it encodes a 'tag peptide', a short internal open reading frame. During trans-translation Ala-aminoacylated tmRNA acts like a tRNA, entering the A-site of stalled ribosomes, displacing the stalled mRNA. The ribosome then switches to translate the ORF on the tmRNA; the nascent peptide is terminated with the 'tag peptide' encoded by the tmRNA and targeted for degradation. The ribosome is freed to recommence translation, which seems to be the essential function of trans-translation. The polypeptide is SsrA-binding protein (Rhodospirillum rubrum (strain ATCC 11170 / ATH 1.1.1 / DSM 467 / LMG 4362 / NCIMB 8255 / S1)).